The sequence spans 228 residues: 2,3-bisphosphoglycerate-dependent phosphoglycerate mutase (228 aa).

Residues 8 to 15 (RHGQSEWN), 21 to 22 (TG), Arg60, 87 to 90 (ERHY), Lys98, 114 to 115 (RR), and 180 to 181 (GN) contribute to the substrate site. Catalysis depends on His9, which acts as the Tele-phosphohistidine intermediate. Glu87 (proton donor/acceptor) is an active-site residue.

This sequence belongs to the phosphoglycerate mutase family. BPG-dependent PGAM subfamily. In terms of assembly, homodimer.

The enzyme catalyses (2R)-2-phosphoglycerate = (2R)-3-phosphoglycerate. The protein operates within carbohydrate degradation; glycolysis; pyruvate from D-glyceraldehyde 3-phosphate: step 3/5. Its function is as follows. Catalyzes the interconversion of 2-phosphoglycerate and 3-phosphoglycerate. The chain is 2,3-bisphosphoglycerate-dependent phosphoglycerate mutase from Zymomonas mobilis subsp. mobilis (strain ATCC 31821 / ZM4 / CP4).